A 73-amino-acid polypeptide reads, in one-letter code: Large ribosomal subunit protein bL31 (73 aa).

The protein belongs to the bacterial ribosomal protein bL31 family. Type A subfamily. As to quaternary structure, part of the 50S ribosomal subunit.

Its function is as follows. Binds the 23S rRNA. The chain is Large ribosomal subunit protein bL31 from Cereibacter sphaeroides (strain ATCC 17025 / ATH 2.4.3) (Rhodobacter sphaeroides).